Here is a 195-residue protein sequence, read N- to C-terminus: MTPTLLSAFWTYTLITAMTPGPNNILALSSATTHGFHQSTRVLAGMSLGFLIVMLLCAGISFSLAVIDPAAVHLLSWAGAAYIVWLAWKIATSPTKEDGLQTKPISFWASFALQFVNVKIILYGVTALSTFVLPQTQALSWIVGVSVLLAMIGTFGNVCWALAGHLFQRLFRQYGRQLNIVLALLLIYCAVRIFY.

The Periplasmic segment spans residues M1 to S7. A helical transmembrane segment spans residues A8–L28. Over S29 to M46 the chain is Cytoplasmic. Residues S47 to I67 form a helical membrane-spanning segment. Topologically, residues D68–P69 are periplasmic. A helical membrane pass occupies residues A70–I90. Residues A91–P104 are Cytoplasmic-facing. A helical membrane pass occupies residues I105–V125. Topologically, residues T126 to W141 are periplasmic. Residues I142–L162 traverse the membrane as a helical segment. Residues A163–R176 are Cytoplasmic-facing. A helical membrane pass occupies residues Q177 to F194. Residue Y195 is a topological domain, periplasmic.

It belongs to the Rht family.

Its subcellular location is the cell inner membrane. It carries out the reaction O-acetyl-L-serine(in) = O-acetyl-L-serine(out). The enzyme catalyses L-cysteine(in) = L-cysteine(out). In terms of biological role, exporter of O-acetylserine (OAS) and cysteine. This chain is Cysteine/O-acetylserine efflux protein (eamB), found in Escherichia coli O157:H7.